Reading from the N-terminus, the 436-residue chain is MQVSVETTQGLERRLTITVPAATVDAAVRKELNGLAKTRRIDGFRPGKAPVAIIKKMFGAMAHARVADEMMQNNFIKAIIENKLSPAGAPTMDPKEIQEGQDFEFTATFEVYPEFEVAGLETIKVEKPVATVKDEDLANMIDTLRKQHATWADVDAAAADGMRVTMDFIGSIDGEEFDGGKAEGFNLVLGAGRMIPGFEDAIMGKKAGDEFTIEVTFPADYHAENLKGKAAKFASKLIKVEEQILPELTEEFVKRFGIESGNVEELKAEVRKNMERELAQALKNSVKEQVLNGLVEANQIDLPKAAVAQEIDTLRQQALQRFGGFQGGNAPELPAELFQAQAERRVRVGLLLGDVIRTNEIKADDARVTSIIESMATAYEDPKEVIEYYQKNEQMLNGVRNLAVEDQAIDLILSKAQVTEKEVAFDEVINKSGAAA.

The PPIase FKBP-type domain maps to 161–246 (GMRVTMDFIG…LIKVEEQILP (86 aa)).

The protein belongs to the FKBP-type PPIase family. Tig subfamily.

The protein resides in the cytoplasm. It catalyses the reaction [protein]-peptidylproline (omega=180) = [protein]-peptidylproline (omega=0). Functionally, involved in protein export. Acts as a chaperone by maintaining the newly synthesized protein in an open conformation. Functions as a peptidyl-prolyl cis-trans isomerase. This is Trigger factor from Aeromonas salmonicida (strain A449).